The following is an 821-amino-acid chain: ATP-dependent Clp protease ATP-binding subunit ClpA homolog (821 aa).

Residues 2–144 (FERFTEKAIK…RAEVIQMLGE (143 aa)) form the Clp R domain. 2 repeat regions span residues 5–70 (FTEK…IGRG) and 80–144 (FTPR…MLGE). ATP is bound by residues 210–217 (GEPGVGKT) and 549–556 (GPTGVGKT).

The protein belongs to the ClpA/ClpB family.

The protein localises to the plastid. It localises to the chloroplast. In terms of biological role, may interact with a ClpP-like protease involved in degradation of denatured proteins in the chloroplast. This Porphyra purpurea (Red seaweed) protein is ATP-dependent Clp protease ATP-binding subunit ClpA homolog (clpC).